Here is a 143-residue protein sequence, read N- to C-terminus: Ayaconin (143 aa).

The signal sequence occupies residues 1–22 (MSFLFFLVVLISIGLWVGPCVA).

In terms of assembly, interacts with human F12 (inactive). Salivary gland.

The protein localises to the secreted. Inhibits the intrinsic blood coagulation pathway in the host by blocking activation of host coagulation factor XII (F12). In Lutzomyia ayacuchensis (Sand fly), this protein is Ayaconin.